The primary structure comprises 501 residues: MAINAQEISALIKKQIENFQPNFDVTETGVVTYIGDGIARARGLDNAMSGELLEFSNGTFGMAQNLESNDVGIIILGDFSTIREGDEVKRTGKIMEVPVGEALIGRVVNPLGQPVDGLGDIETTGFRPVETPAPGVMQRKSVFESLQTGLKAIDALVPIGRGQRELIIGDRQTGKTSVAIDAILNQKGQDMICIYVAIGQKESTVRTQVETLRRYGALDYTIVVTASASQPSPLLFIAPYAGVAMAEEFMYNGKHVLIVYDDLSKQAVAYRELSLLLRRPPGREAYPGDVFYLHSRLLERSAKVSDDLGGGSITALPFIETQAGDISAYIATNVISITDGQIFLQEDLFNSGIRPAIDAGSSVSRVGGSAQIKAMKRVAGTLRLDLASYRELEAFTQFGSDLDAATQAKLNRGRRTVEILKQPLHKPLPVEKQVVILYALTHGFLDDVPVDDILAFEEALYDYFDAHYDHLFETIRTTKDLPQEAELDVAIQAFKAQSNFK.

169–176 lines the ATP pocket; sequence GDRQTGKT.

The protein belongs to the ATPase alpha/beta chains family. In terms of assembly, F-type ATPases have 2 components, CF(1) - the catalytic core - and CF(0) - the membrane proton channel. CF(1) has five subunits: alpha(3), beta(3), gamma(1), delta(1), epsilon(1). CF(0) has three main subunits: a(1), b(2) and c(9-12). The alpha and beta chains form an alternating ring which encloses part of the gamma chain. CF(1) is attached to CF(0) by a central stalk formed by the gamma and epsilon chains, while a peripheral stalk is formed by the delta and b chains.

The protein localises to the cell membrane. The catalysed reaction is ATP + H2O + 4 H(+)(in) = ADP + phosphate + 5 H(+)(out). In terms of biological role, produces ATP from ADP in the presence of a proton gradient across the membrane. The alpha chain is a regulatory subunit. This chain is ATP synthase subunit alpha, found in Streptococcus equi subsp. equi (strain 4047).